The sequence spans 268 residues: Tryptophan synthase alpha chain (268 aa).

Active-site proton acceptor residues include glutamate 47 and aspartate 58.

This sequence belongs to the TrpA family. Tetramer of two alpha and two beta chains.

Its subcellular location is the plastid. The protein resides in the chloroplast. It carries out the reaction (1S,2R)-1-C-(indol-3-yl)glycerol 3-phosphate + L-serine = D-glyceraldehyde 3-phosphate + L-tryptophan + H2O. It functions in the pathway amino-acid biosynthesis; L-tryptophan biosynthesis; L-tryptophan from chorismate: step 5/5. In terms of biological role, the alpha subunit is responsible for the aldol cleavage of indoleglycerol phosphate to indole and glyceraldehyde 3-phosphate. This is Tryptophan synthase alpha chain from Gracilaria tenuistipitata var. liui (Red alga).